A 101-amino-acid polypeptide reads, in one-letter code: Small ribosomal subunit protein bS18c (101 aa).

It belongs to the bacterial ribosomal protein bS18 family. As to quaternary structure, part of the 30S ribosomal subunit.

It is found in the plastid. Its subcellular location is the chloroplast. This Nymphaea alba (White water-lily) protein is Small ribosomal subunit protein bS18c.